A 145-amino-acid polypeptide reads, in one-letter code: Putative type I specificity subunit S.MpnORF289P C-terminus (145 aa).

The protein belongs to the type-I restriction system S methylase family. The methyltransferase is composed of M and S polypeptides.

The C-terminal section of a specificity (S) subunit of a type I methyltransferase (MTase); this subunit dictates DNA sequence specificity. The single R subunit has multiple frameshifts and is probably not expressed. This is Putative type I specificity subunit S.MpnORF289P C-terminus from Mycoplasma pneumoniae (strain ATCC 29342 / M129 / Subtype 1) (Mycoplasmoides pneumoniae).